A 424-amino-acid polypeptide reads, in one-letter code: Serine--tRNA ligase (424 aa).

232-234 (TAE) is a binding site for L-serine. 263 to 265 (RRE) lines the ATP pocket. Glu-286 lines the L-serine pocket. Position 350 to 353 (350 to 353 (EISS)) interacts with ATP. Position 384 (Ser-384) interacts with L-serine.

Belongs to the class-II aminoacyl-tRNA synthetase family. Type-1 seryl-tRNA synthetase subfamily. In terms of assembly, homodimer. The tRNA molecule binds across the dimer.

The protein localises to the cytoplasm. The enzyme catalyses tRNA(Ser) + L-serine + ATP = L-seryl-tRNA(Ser) + AMP + diphosphate + H(+). It carries out the reaction tRNA(Sec) + L-serine + ATP = L-seryl-tRNA(Sec) + AMP + diphosphate + H(+). The protein operates within aminoacyl-tRNA biosynthesis; selenocysteinyl-tRNA(Sec) biosynthesis; L-seryl-tRNA(Sec) from L-serine and tRNA(Sec): step 1/1. In terms of biological role, catalyzes the attachment of serine to tRNA(Ser). Is also able to aminoacylate tRNA(Sec) with serine, to form the misacylated tRNA L-seryl-tRNA(Sec), which will be further converted into selenocysteinyl-tRNA(Sec). In Prochlorococcus marinus subsp. pastoris (strain CCMP1986 / NIES-2087 / MED4), this protein is Serine--tRNA ligase.